A 121-amino-acid polypeptide reads, in one-letter code: Large ribosomal subunit protein uL18 (121 aa).

This sequence belongs to the universal ribosomal protein uL18 family. In terms of assembly, part of the 50S ribosomal subunit; part of the 5S rRNA/L5/L18/L25 subcomplex. Contacts the 5S and 23S rRNAs.

Its function is as follows. This is one of the proteins that bind and probably mediate the attachment of the 5S RNA into the large ribosomal subunit, where it forms part of the central protuberance. This is Large ribosomal subunit protein uL18 from Dehalococcoides mccartyi (strain ATCC BAA-2266 / KCTC 15142 / 195) (Dehalococcoides ethenogenes (strain 195)).